The following is a 591-amino-acid chain: ESX-1 secretion system protein EccCb1 (591 aa).

FtsK domains follow at residues 65 to 259 (LQDV…NETQ) and 359 to 545 (LTPA…EKQE). Residues 84 to 91 (GAPQTGKS) and 376 to 383 (GAAKSGKT) contribute to the ATP site.

Part of the ESX-1 / type VII secretion system (T7SS), which is composed of cytosolic and membrane components. The ESX-1 membrane complex is composed of EccB1, EccCa1, EccCb1, EccD1 and EccE1. Interacts with EccCa1, EspK and the C-terminus of EsxB. Residues 1-261 interact with EsxB and an artificial EsxB-EsxA heterodimer.

It is found in the cytoplasm. EsxB binding to the second FtsK domain of EccCb1 causes multimerization; a subsequent unknown step relieves the allosteric inhibition of linker 2 on FtsK domain 1 (in EccCa1 subunit), activating the ATPase activity. Its function is as follows. Part of the ESX-1 specialized secretion system, which delivers several virulence factors to host cells during infection, including the key virulence factors EsxA (ESAT-6) and EsxB (CFP-10). EccCb1 may link the cytosolic components of the system with the membrane components. The sequence is that of ESX-1 secretion system protein EccCb1 from Mycobacterium tuberculosis (strain ATCC 25618 / H37Rv).